Consider the following 389-residue polypeptide: Na(+)/H(+) antiporter NhaA (389 aa).

11 helical membrane passes run 17 to 37, 59 to 79, 95 to 115, 124 to 144, 154 to 174, 177 to 197, 213 to 233, 261 to 281, 292 to 312, 328 to 348, and 363 to 383; these read ILLLIAVAFAMLMANSPLAGF, LLLWINDGLMALFFLLIGLEV, SLPTFAAIGGMLVPAGIYLLF, AGWAIPAATDIAFALGIMALL, VFLLALAIIDDLGVIVIIALF, SDLSTVSLIIASIAIVGLVAL, LILWVAVLKSGVHATLAGVII, FLILPVFAFANAGVALGNMSL, IALGLMLGKPIGVMLFSFVAV, IAPVAAMCGIGFTMSMFIASL, and LGTLMGSIFAALIGYFWLSKV.

The protein belongs to the NhaA Na(+)/H(+) (TC 2.A.33) antiporter family.

It localises to the cell inner membrane. The catalysed reaction is Na(+)(in) + 2 H(+)(out) = Na(+)(out) + 2 H(+)(in). Na(+)/H(+) antiporter that extrudes sodium in exchange for external protons. In Shewanella oneidensis (strain ATCC 700550 / JCM 31522 / CIP 106686 / LMG 19005 / NCIMB 14063 / MR-1), this protein is Na(+)/H(+) antiporter NhaA.